The following is a 963-amino-acid chain: Iron-responsive element-binding protein 2 (963 aa).

Positions 512, 578, and 581 each coordinate [4Fe-4S] cluster.

It belongs to the aconitase/IPM isomerase family. As to quaternary structure, interacts with RBCK1 only in iron-rich conditions. Interacts (when associated with the 4Fe-4S) with FBXL5. Interacts with CIAO1 and CIAO2A. The cofactor is [4Fe-4S] cluster. Ubiquitinated and degraded by the proteasome in presence of high level of iron and oxygen. Ubiquitinated by a SCF complex containing FBXL5. Upon iron and oxygen depletion FBXL5 is degraded, preventing ubiquitination and allowing its RNA-binding activity.

The protein resides in the cytoplasm. In terms of biological role, RNA-binding protein that binds to iron-responsive elements (IRES), which are stem-loop structures found in the 5'-UTR of ferritin, and delta aminolevulinic acid synthase mRNAs, and in the 3'-UTR of transferrin receptor mRNA. Binding to the IRE element in ferritin results in the repression of its mRNA translation. Binding of the protein to the transferrin receptor mRNA inhibits the degradation of this otherwise rapidly degraded mRNA. The polypeptide is Iron-responsive element-binding protein 2 (Ireb2) (Mus musculus (Mouse)).